The chain runs to 1302 residues: Cingulin-like protein 1 (1302 aa).

The segment at 1–554 is head; it reads MELYFGEYQH…ELTQQTNEET (554 aa). The ZIM motif lies at 37 to 51; the sequence is AGSYGVSIRVQGIDG. The interval 75-104 is disordered; the sequence is PFPPPVINNLPLHSSNGSVPKENSEELQLP. A phosphoserine mark is found at Ser112 and Ser202. Disordered regions lie at residues 186–209, 251–305, and 364–392; these read KKPW…EDPA, FTSG…TPTS, and PGLQ…VDSA. Residues 195 to 204 are compositionally biased toward polar residues; it reads PSNSQPTSPS. A compositionally biased stretch (basic and acidic residues) spans 264–282; it reads AHPETKKTRPDVLPFRRQD. Phosphoserine occurs at positions 283, 297, and 298. A compositionally biased stretch (low complexity) spans 296-305; sequence SSSSSTTPTS. Positions 366 to 377 are enriched in basic residues; it reads LQRRGRSGKRNR. Positions 378-388 are enriched in basic and acidic residues; the sequence is INTDDRKRSRS. Residues Ser388, Ser391, and Ser486 each carry the phosphoserine modification. Residues 604 to 1258 are a coiled coil; it reads NSTSEVKDLL…QLNSMKKDLR (655 aa). A compositionally biased stretch (basic and acidic residues) spans 655–664; the sequence is RSQHNEKVEE. A disordered region spans residues 655–675; that stretch reads RSQHNEKVEENSTLQQRLEES. Ser708 is modified (phosphoserine). 2 disordered regions span residues 903–929 and 1263–1287; these read AAQG…SEQK and PSKV…YEAP. Basic and acidic residues predominate over residues 917–929; sequence QLSEKLKEESEQK. The interval 1263–1302 is tail; that stretch reads PSKVLDDMDDDDDLSTDGGSLYEAPVSYTFSKDSTVASQI.

The protein belongs to the cingulin family. Homodimer or oligomer. Interacts with CD2AP and SH3BP1; probably part of a complex at cell junctions. In terms of tissue distribution, smooth muscle, spleen, testis, fetal brain, amygdala, corpus callosum, cerebellum, thalamus and subthalamic nucleus of adult brain.

The protein resides in the cell junction. Its subcellular location is the tight junction. May be involved in anchoring the apical junctional complex, especially tight junctions, to actin-based cytoskeletons. In Homo sapiens (Human), this protein is Cingulin-like protein 1 (CGNL1).